An 83-amino-acid polypeptide reads, in one-letter code: Large ribosomal subunit protein bL28 (83 aa).

Belongs to the bacterial ribosomal protein bL28 family.

The protein is Large ribosomal subunit protein bL28 of Amoebophilus asiaticus (strain 5a2).